Here is an 88-residue protein sequence, read N- to C-terminus: Alkene monooxygenase system, oxygenase component subunit gamma (88 aa).

It belongs to the TmoB/XamoB family. As to quaternary structure, the alkene monooxygenase multicomponent enzyme system is composed of an electron transfer component and a monooxygenase component interacting with the effector protein XamoD. The electron transfer component is composed of a ferredoxin reductase (XamoF) and a ferredoxin (XamoC), and the monooxygenase component is formed by a heterohexamer (dimer of heterotrimers) of two alpha subunits (XamoA), two beta subunits (XamoE) and two gamma subunits (XamoB).

The protein localises to the cytoplasm. The catalysed reaction is propene + NADH + O2 + H(+) = 1,2-epoxypropane + NAD(+) + H2O. With respect to regulation, inhibited by propyne. Its function is as follows. Component of the alkene monooxygenase multicomponent enzyme system which catalyzes the O2- and NADH-dependent epoxidation of short chain (C2 to C6) alkenes to their corresponding epoxides. Also able to catalyze the oxidation of a number of chlorinated alkenes, including trichloroethylene, cis- and trans-1,2-dichloroethylene, vinyl chloride, 1-chloropropylene, 1,3-dichloropropylene and 2,3-dichloropropylene. The sequence is that of Alkene monooxygenase system, oxygenase component subunit gamma from Xanthobacter autotrophicus (strain ATCC BAA-1158 / Py2).